The chain runs to 186 residues: ADP-ribosylation factor-like protein 6 (186 aa).

Glycine 2 carries N-myristoyl glycine lipidation. GTP-binding positions include 24 to 31 (GLDNSGKT), threonine 50, 69 to 73 (DMSGQ), glycine 72, 130 to 133 (NKMD), and alanine 164. Threonine 50 contributes to the Mg(2+) binding site.

The protein belongs to the small GTPase superfamily. Arf family. In terms of tissue distribution, expressed in brain, heart and eye. Isoform 2 is expressed only in the retina.

The protein localises to the cell projection. It localises to the cilium membrane. Its subcellular location is the cytoplasm. It is found in the cytoskeleton. The protein resides in the cilium axoneme. The protein localises to the cilium basal body. Probably involved in membrane protein trafficking at the base of the ciliary organelle. May function in cilia biogenesis. Isoform 2 is required for proper retinal function and organization. This Danio rerio (Zebrafish) protein is ADP-ribosylation factor-like protein 6 (arl6).